The primary structure comprises 249 residues: Isoprenyl transferase (249 aa).

Residue D25 is part of the active site. D25 contributes to the Mg(2+) binding site. Substrate is bound by residues 26–29 (GNGR), W30, R38, H42, and 70–72 (STE). N73 (proton acceptor) is an active-site residue. Residues W74, R76, R197, and 203–205 (RLS) each bind substrate. Mg(2+) is bound at residue E216.

It belongs to the UPP synthase family. In terms of assembly, homodimer. Mg(2+) serves as cofactor.

Functionally, catalyzes the condensation of isopentenyl diphosphate (IPP) with allylic pyrophosphates generating different type of terpenoids. This is Isoprenyl transferase from Streptococcus pyogenes serotype M3 (strain ATCC BAA-595 / MGAS315).